A 328-amino-acid polypeptide reads, in one-letter code: Acetyl-coenzyme A carboxylase carboxyl transferase subunit alpha (328 aa).

Residues 42–296 (SFKEQLSILK…KESLISELHF (255 aa)) form the CoA carboxyltransferase C-terminal domain.

This sequence belongs to the AccA family. As to quaternary structure, acetyl-CoA carboxylase is a heterohexamer composed of biotin carboxyl carrier protein (accB), biotin carboxylase (accC) and two subunits each of ACCase subunit alpha (accA) and ACCase subunit beta (accD).

The protein localises to the plastid. The protein resides in the chloroplast. It catalyses the reaction N(6)-carboxybiotinyl-L-lysyl-[protein] + acetyl-CoA = N(6)-biotinyl-L-lysyl-[protein] + malonyl-CoA. It participates in lipid metabolism; malonyl-CoA biosynthesis; malonyl-CoA from acetyl-CoA: step 1/1. Its function is as follows. Component of the acetyl coenzyme A carboxylase (ACC) complex. First, biotin carboxylase catalyzes the carboxylation of biotin on its carrier protein (BCCP) and then the CO(2) group is transferred by the carboxyltransferase to acetyl-CoA to form malonyl-CoA. This Gracilaria tenuistipitata var. liui (Red alga) protein is Acetyl-coenzyme A carboxylase carboxyl transferase subunit alpha.